Here is a 138-residue protein sequence, read N- to C-terminus: Cellular retinoic acid-binding protein 2 (138 aa).

The short motif at lysine 21–lysine 31 is the Nuclear localization signal element. Lysine 102 participates in a covalent cross-link: Glycyl lysine isopeptide (Lys-Gly) (interchain with G-Cter in SUMO). Arginine 133–tyrosine 135 lines the all-trans-retinoate pocket.

It belongs to the calycin superfamily. Fatty-acid binding protein (FABP) family. In terms of assembly, interacts with importin alpha, RXR and RARA. Sumoylated in response to retinoic acid binding, sumoylation is critical for dissociation from ER and subsequent nuclear translocation.

The protein resides in the cytoplasm. Its subcellular location is the endoplasmic reticulum. It is found in the nucleus. Functionally, transports retinoic acid to the nucleus. Regulates the access of retinoic acid to the nuclear retinoic acid receptors. This is Cellular retinoic acid-binding protein 2 (CRABP2) from Bos taurus (Bovine).